The primary structure comprises 329 residues: Protein PRY2 (329 aa).

Positions methionine 1–serine 18 are cleaved as a signal peptide. Residues threonine 122–valine 131 show a composition bias toward polar residues. The disordered stretch occupies residues threonine 122–valine 197. Positions threonine 132–serine 190 are enriched in low complexity. The region spanning valine 197–tyrosine 311 is the SCP domain.

The protein belongs to the CRISP family. Post-translationally, O-glycosylated.

It is found in the secreted. Its function is as follows. Secreted protein required for efficient export of lipids such as acetylated sterols. Acts in detoxification of hydrophobic compounds. The polypeptide is Protein PRY2 (PRY2) (Saccharomyces cerevisiae (strain ATCC 204508 / S288c) (Baker's yeast)).